The following is a 380-amino-acid chain: Coiled-coil domain-containing protein 74B (380 aa).

Disordered regions lie at residues Met1–Leu51, Leu89–Arg108, and Gly128–Gln202. A compositionally biased stretch (polar residues) spans Leu34–Ser44. Residues Gln47–Gln93 adopt a coiled-coil conformation. A compositionally biased stretch (basic residues) spans Arg141–Arg151. Residues Asp165–Gly182 show a composition bias toward polar residues.

The polypeptide is Coiled-coil domain-containing protein 74B (CCDC74B) (Homo sapiens (Human)).